The primary structure comprises 383 residues: UDP-N-acetylglucosamine--N-acetylmuramyl-(pentapeptide) pyrophosphoryl-undecaprenol N-acetylglucosamine transferase (383 aa).

Residues 10–12 (TGG), asparagine 124, arginine 165, serine 190, isoleucine 245, and glutamine 290 each bind UDP-N-acetyl-alpha-D-glucosamine. The tract at residues 364-383 (PFGQAREPGQKPARPPDLAS) is disordered.

It belongs to the glycosyltransferase 28 family. MurG subfamily.

The protein resides in the cell inner membrane. It carries out the reaction di-trans,octa-cis-undecaprenyl diphospho-N-acetyl-alpha-D-muramoyl-L-alanyl-D-glutamyl-meso-2,6-diaminopimeloyl-D-alanyl-D-alanine + UDP-N-acetyl-alpha-D-glucosamine = di-trans,octa-cis-undecaprenyl diphospho-[N-acetyl-alpha-D-glucosaminyl-(1-&gt;4)]-N-acetyl-alpha-D-muramoyl-L-alanyl-D-glutamyl-meso-2,6-diaminopimeloyl-D-alanyl-D-alanine + UDP + H(+). Its pathway is cell wall biogenesis; peptidoglycan biosynthesis. Functionally, cell wall formation. Catalyzes the transfer of a GlcNAc subunit on undecaprenyl-pyrophosphoryl-MurNAc-pentapeptide (lipid intermediate I) to form undecaprenyl-pyrophosphoryl-MurNAc-(pentapeptide)GlcNAc (lipid intermediate II). This Anaeromyxobacter sp. (strain K) protein is UDP-N-acetylglucosamine--N-acetylmuramyl-(pentapeptide) pyrophosphoryl-undecaprenol N-acetylglucosamine transferase.